The primary structure comprises 145 residues: D-aminoacyl-tRNA deacylase (145 aa).

Positions 137-138 match the Gly-cisPro motif, important for rejection of L-amino acids motif; it reads GP.

Belongs to the DTD family. In terms of assembly, homodimer.

It is found in the cytoplasm. It carries out the reaction glycyl-tRNA(Ala) + H2O = tRNA(Ala) + glycine + H(+). The catalysed reaction is a D-aminoacyl-tRNA + H2O = a tRNA + a D-alpha-amino acid + H(+). Functionally, an aminoacyl-tRNA editing enzyme that deacylates mischarged D-aminoacyl-tRNAs. Also deacylates mischarged glycyl-tRNA(Ala), protecting cells against glycine mischarging by AlaRS. Acts via tRNA-based rather than protein-based catalysis; rejects L-amino acids rather than detecting D-amino acids in the active site. By recycling D-aminoacyl-tRNA to D-amino acids and free tRNA molecules, this enzyme counteracts the toxicity associated with the formation of D-aminoacyl-tRNA entities in vivo and helps enforce protein L-homochirality. The chain is D-aminoacyl-tRNA deacylase from Pseudomonas syringae pv. syringae (strain B728a).